The chain runs to 87 residues: U3-theraphotoxin-Cg1b (87 aa).

The signal sequence occupies residues 1–23 (MRTFTLIAILTCAVLVIFHVSAA). The propeptide occupies 24–48 (EELEAQDVIQPEDIFTGVATLEEDR). Intrachain disulfides connect Cys-52-Cys-65, Cys-56-Cys-79, and Cys-73-Cys-84.

The protein belongs to the neurotoxin 12 (Hwtx-2) family. 03 (juruin) subfamily. As to expression, expressed by the venom gland.

It is found in the secreted. Probable ion channel inhibitor. The chain is U3-theraphotoxin-Cg1b from Chilobrachys guangxiensis (Chinese earth tiger tarantula).